Consider the following 518-residue polypeptide: Glutamate--cysteine ligase (518 aa).

Belongs to the glutamate--cysteine ligase type 1 family. Type 1 subfamily.

It catalyses the reaction L-cysteine + L-glutamate + ATP = gamma-L-glutamyl-L-cysteine + ADP + phosphate + H(+). It functions in the pathway sulfur metabolism; glutathione biosynthesis; glutathione from L-cysteine and L-glutamate: step 1/2. The chain is Glutamate--cysteine ligase from Salmonella gallinarum (strain 287/91 / NCTC 13346).